The sequence spans 419 residues: MARAKFERSKPHVNIGTIGHVDHGKTTLTAAITMALAALGGATGKKYDEIDSAPEEKARGITINTAHVEYETPNRHYAHVDCPGHADYVKNMITGAAQMDGAILVVSGADGPMPQTKEHILLAKQVGVPNMVVFLNKEDQVDDAELLELVELEVRETLDKYEFPGDEIPIVSGSALLALEALVENPKIQRGDNKWVDKIFDLMDKVDEYIPTPDRETDKPFLLAVEDVLSITGRGTVATGRVERGTLKVGENVELIGLKDTKATVVTGLEMFKKTLDETMAGDNVGVLLRGIQKKDVERGMVLAKPGSITPHTKFEAQVYVLTKEEGGRHSPFLVGYQPQFFIRTTDVTGKIVSFTHIQMKNPSSVAEEHSNKMAMPGDRIEVTVQLIYPVAVEKGMRFAIREGGRTVGAGVVTNILEE.

A tr-type G domain is found at lysine 10–aspartate 214. The interval glycine 19–threonine 26 is G1. Glycine 19 to threonine 26 is a GTP binding site. Threonine 26 is a binding site for Mg(2+). The G2 stretch occupies residues glycine 60 to asparagine 64. The segment at aspartate 81–glycine 84 is G3. GTP is bound by residues aspartate 81 to histidine 85 and asparagine 136 to aspartate 139. The interval asparagine 136–aspartate 139 is G4. The G5 stretch occupies residues serine 174–leucine 176.

This sequence belongs to the TRAFAC class translation factor GTPase superfamily. Classic translation factor GTPase family. EF-Tu/EF-1A subfamily.

It localises to the plastid. The protein resides in the chloroplast. The enzyme catalyses GTP + H2O = GDP + phosphate + H(+). GTP hydrolase that promotes the GTP-dependent binding of aminoacyl-tRNA to the A-site of ribosomes during protein biosynthesis. In Tetradesmus obliquus (Green alga), this protein is Elongation factor Tu, chloroplastic (tufA).